Here is a 193-residue protein sequence, read N- to C-terminus: Ion-translocating oxidoreductase complex subunit A (193 aa).

6 helical membrane passes run 5 to 25, 39 to 59, 62 to 82, 102 to 122, 134 to 154, and 172 to 192; these read ALLLLSTALVNNVVLVKFLGL, LGMGLATTFVITLAAAASWML, WLLAPFDLGFLRILSFILVIA, SLGIYLPLITTNCAVLGVALL, VLFGFGSALGFTLVLLIFAGL, and AAFITISLLSLAFMGLSGLVA.

This sequence belongs to the NqrDE/RnfAE family. In terms of assembly, the complex is composed of six subunits: RnfA, RnfB, RnfC, RnfD, RnfE and RnfG.

It localises to the cell inner membrane. Part of a membrane-bound complex that couples electron transfer with translocation of ions across the membrane. In Aromatoleum aromaticum (strain DSM 19018 / LMG 30748 / EbN1) (Azoarcus sp. (strain EbN1)), this protein is Ion-translocating oxidoreductase complex subunit A.